A 51-amino-acid chain; its full sequence is Gene 18 protein (51 aa).

A disordered region spans residues 24-51 (AAGGWKRPRKPRTTKPKPAPKQEPATEE). Residues 29–38 (KRPRKPRTTK) show a composition bias toward basic residues.

The protein is Gene 18 protein (18) of Mycobacterium phage D29 (Mycobacteriophage D29).